The primary structure comprises 269 residues: JmjC domain-containing protein 8 (269 aa).

The signal sequence occupies residues 1 to 24 (MAAAGRRGLLLLFVLWMMVTVILP). Residues Asn135, Asn145, and Asn214 are each glycosylated (N-linked (GlcNAc...) asparagine). The JmjC domain occupies 136–269 (DTLYFFGDNN…TSVFISTFLG (134 aa)).

In terms of assembly, oligomer. Dimer. Interacts with PKM; regulates angiogenesis and metabolism. Post-translationally, N-glycosylated.

Its subcellular location is the endoplasmic reticulum lumen. The protein resides in the cytoplasm. In terms of biological role, functions as a positive regulator of TNF-induced NF-kappaB signaling. Regulates angiogenesis and cellular metabolism through interaction with PKM. In Mus musculus (Mouse), this protein is JmjC domain-containing protein 8.